Consider the following 316-residue polypeptide: Methionyl-tRNA formyltransferase (316 aa).

Position 112–115 (112–115 (SLLP)) interacts with (6S)-5,6,7,8-tetrahydrofolate.

This sequence belongs to the Fmt family.

The catalysed reaction is L-methionyl-tRNA(fMet) + (6R)-10-formyltetrahydrofolate = N-formyl-L-methionyl-tRNA(fMet) + (6S)-5,6,7,8-tetrahydrofolate + H(+). Attaches a formyl group to the free amino group of methionyl-tRNA(fMet). The formyl group appears to play a dual role in the initiator identity of N-formylmethionyl-tRNA by promoting its recognition by IF2 and preventing the misappropriation of this tRNA by the elongation apparatus. This Actinobacillus pleuropneumoniae serotype 7 (strain AP76) protein is Methionyl-tRNA formyltransferase.